We begin with the raw amino-acid sequence, 242 residues long: Basic agglutinin (242 aa).

Asn-45 and Asn-220 each carry an N-linked (GlcNAc...) asparagine glycan.

Belongs to the leguminous lectin family.

In terms of biological role, lectin. The sequence is that of Basic agglutinin (WBAI) from Psophocarpus tetragonolobus (Winged bean).